The primary structure comprises 190 residues: Imidazoleglycerol-phosphate dehydratase (190 aa).

The protein belongs to the imidazoleglycerol-phosphate dehydratase family.

The protein resides in the cytoplasm. The enzyme catalyses D-erythro-1-(imidazol-4-yl)glycerol 3-phosphate = 3-(imidazol-4-yl)-2-oxopropyl phosphate + H2O. Its pathway is amino-acid biosynthesis; L-histidine biosynthesis; L-histidine from 5-phospho-alpha-D-ribose 1-diphosphate: step 6/9. This is Imidazoleglycerol-phosphate dehydratase from Campylobacter fetus subsp. fetus (strain 82-40).